The following is a 358-amino-acid chain: N-acylethanolamine-hydrolyzing acid amidase (358 aa).

The N-terminal stretch at 1 to 26 is a signal peptide; sequence MQGTGHPVRPVLELLLLLLLLAGVGG. Asparagine 39 and asparagine 108 each carry an N-linked (GlcNAc...) asparagine glycan. The active-site Nucleophile is cysteine 127. Residues asparagine 310, asparagine 334, and asparagine 356 are each glycosylated (N-linked (GlcNAc...) asparagine).

The protein belongs to the acid ceramidase family. Heterodimer of an alpha and a beta subunit, produced by autocatalytic cleavage. N-glycosylated. Tunicamycin treatment causes a reduction in specific activity against N-palmitoylethanolamine. Post-translationally, autoproteolytic cleavage at pH 4.5 gives rise to the alpha and beta subunit. Cleavage gives rise to a conformation change that activates the enzyme. The same catalytic Cys residue mediates the autoproteolytic cleavage and subsequent hydrolysis of lipid substrates.

The protein localises to the lysosome. Its subcellular location is the membrane. It catalyses the reaction N-hexadecanoylethanolamine + H2O = ethanolamine + hexadecanoate. The enzyme catalyses an N-(long-chain fatty acyl)ethanolamine + H2O = a long-chain fatty acid + ethanolamine. It carries out the reaction N-dodecanoylethanolamine + H2O = dodecanoate + ethanolamine. The catalysed reaction is N-tetradecanoylethanolamine + H2O = tetradecanoate + ethanolamine. It catalyses the reaction an N-acylsphing-4-enine + H2O = sphing-4-enine + a fatty acid. The enzyme catalyses N-hexadecanoylsphing-4-enine + H2O = sphing-4-enine + hexadecanoate. It carries out the reaction N-dodecanoylsphing-4-enine + H2O = dodecanoate + sphing-4-enine. Its pathway is lipid metabolism; fatty acid metabolism. In terms of biological role, degrades bioactive fatty acid amides to their corresponding acids, with the following preference: N-palmitoylethanolamine &gt; N-myristoylethanolamine &gt; N-stearoylethanolamine &gt; N-oleoylethanolamine &gt; N-linoleoylethanolamine &gt; N-arachidonoylethanolamine. The chain is N-acylethanolamine-hydrolyzing acid amidase from Oryctolagus cuniculus (Rabbit).